We begin with the raw amino-acid sequence, 311 residues long: Probable cell division protein WhiA (311 aa).

The segment at residues serine 274 to asparagine 307 is a DNA-binding region (H-T-H motif).

The protein belongs to the WhiA family.

Its function is as follows. Involved in cell division and chromosome segregation. In Carboxydothermus hydrogenoformans (strain ATCC BAA-161 / DSM 6008 / Z-2901), this protein is Probable cell division protein WhiA.